Here is a 367-residue protein sequence, read N- to C-terminus: NADH-ubiquinone oxidoreductase chain 1 (367 aa).

The next 10 helical transmembrane spans lie at 5-25 (IIIS…GIAY), 43-63 (PNFV…KLLL), 74-94 (IILF…GYAV), 108-128 (LGIY…LLAG), 152-172 (LVLS…NLSV), 179-199 (AIWN…GSVA), 225-245 (AVVF…MCIL), 265-285 (FFYS…NIFY), 301-321 (LIYG…FIWV), and 336-356 (FCWT…PCIL).

The protein belongs to the complex I subunit 1 family.

It localises to the mitochondrion inner membrane. It catalyses the reaction a ubiquinone + NADH + 5 H(+)(in) = a ubiquinol + NAD(+) + 4 H(+)(out). Functionally, core subunit of the mitochondrial membrane respiratory chain NADH dehydrogenase (Complex I) that is believed to belong to the minimal assembly required for catalysis. Complex I functions in the transfer of electrons from NADH to the respiratory chain. The immediate electron acceptor for the enzyme is believed to be ubiquinone. This chain is NADH-ubiquinone oxidoreductase chain 1 (ND1), found in Podospora anserina (strain S / ATCC MYA-4624 / DSM 980 / FGSC 10383) (Pleurage anserina).